An 803-amino-acid chain; its full sequence is Dynein axonemal intermediate chain 4 (803 aa).

Polar residues predominate over residues 1–33 (MPSSPTSTRKQTNFTASVSAQSRKSISFGNPKS). Disordered stretches follow at residues 1-41 (MPSS…GYAG), 88-109 (LYHP…SQEG), and 143-163 (STVS…LEDP). Over residues 143-155 (STVSKSSISTTES) the composition is skewed to low complexity. WD repeat units lie at residues 492–532 (QSPY…NTPV), 541–589 (KHLG…DCHD), 616–656 (SRQA…QYLE), 660–700 (GHKG…PFFT), 703–742 (PTTY…LDPL), and 748–787 (NPGI…TPTE).

As to quaternary structure, part of the multisubunit axonemal dynein complex formed at least of two heavy chains and a number of intermediate and light chains. Associated with axonemal dynein subunits such as, DNAH2, DNAI3, and DYNLT1. Interacts with DYNLT1.

It is found in the cytoplasm. It localises to the cytoskeleton. The protein localises to the flagellum axoneme. Its subcellular location is the cilium axoneme. The protein resides in the dynein axonemal particle. Plays a critical role in the assembly of axonemal dynein complex, thereby playing a role in ciliary motility. The chain is Dynein axonemal intermediate chain 4 from Rattus norvegicus (Rat).